The chain runs to 138 residues: Gap junction alpha-4 protein (138 aa).

The Cytoplasmic portion of the chain corresponds to 1-16 (DWGFLEKLLDQVQEHS). Residues 17–39 (TVVGKIWLTVLFIFRILILGLAG) form a helical membrane-spanning segment. The Extracellular portion of the chain corresponds to 40-74 (ESVWGDEQSDFECNTAQPGCTNVCYDQAFPISHIP). A helical transmembrane segment spans residues 75 to 97 (YWVLQFLFVSTPTLVYLGHVIYL). Topologically, residues 98–138 (SRREERLRQKEGELRALPDKDPRVERALAGIERQMAKISVA) are cytoplasmic.

This sequence belongs to the connexin family. Alpha-type (group II) subfamily. As to quaternary structure, a connexon is composed of a hexamer of connexins.

It is found in the cell membrane. Its subcellular location is the cell junction. The protein resides in the gap junction. Functionally, one gap junction consists of a cluster of closely packed pairs of transmembrane channels, the connexons, through which materials of low MW diffuse from one cell to a neighboring cell. The chain is Gap junction alpha-4 protein (GJA4) from Sus scrofa (Pig).